Reading from the N-terminus, the 196-residue chain is ATP-dependent Clp protease proteolytic subunit (196 aa).

Serine 101 serves as the catalytic Nucleophile. Histidine 126 is an active-site residue.

This sequence belongs to the peptidase S14 family. Component of the chloroplastic Clp protease core complex.

The protein localises to the plastid. Its subcellular location is the chloroplast stroma. It catalyses the reaction Hydrolysis of proteins to small peptides in the presence of ATP and magnesium. alpha-casein is the usual test substrate. In the absence of ATP, only oligopeptides shorter than five residues are hydrolyzed (such as succinyl-Leu-Tyr-|-NHMec, and Leu-Tyr-Leu-|-Tyr-Trp, in which cleavage of the -Tyr-|-Leu- and -Tyr-|-Trp bonds also occurs).. Its function is as follows. Cleaves peptides in various proteins in a process that requires ATP hydrolysis. Has a chymotrypsin-like activity. Plays a major role in the degradation of misfolded proteins. This is ATP-dependent Clp protease proteolytic subunit from Citrus sinensis (Sweet orange).